A 233-amino-acid chain; its full sequence is Sugar fermentation stimulation protein homolog (233 aa).

The protein belongs to the SfsA family.

This is Sugar fermentation stimulation protein homolog from Pyrobaculum neutrophilum (strain DSM 2338 / JCM 9278 / NBRC 100436 / V24Sta) (Thermoproteus neutrophilus).